A 360-amino-acid polypeptide reads, in one-letter code: Phospho-N-acetylmuramoyl-pentapeptide-transferase (360 aa).

The next 10 helical transmembrane spans lie at 21–41 (YLSF…LWMG), 73–93 (TMGG…WANL), 94–114 (SNPY…VGFV), 132–152 (WKYF…YAYG), 168–188 (VMPQ…VGTS), 199–219 (GLAI…AWAT), 236–256 (ASEL…FLWF), 263–283 (VFMG…IAVL), 288–308 (LVLV…ILQV), and 338–358 (VIVR…ATLK).

It belongs to the glycosyltransferase 4 family. MraY subfamily. The cofactor is Mg(2+).

The protein localises to the cell inner membrane. It carries out the reaction UDP-N-acetyl-alpha-D-muramoyl-L-alanyl-gamma-D-glutamyl-meso-2,6-diaminopimeloyl-D-alanyl-D-alanine + di-trans,octa-cis-undecaprenyl phosphate = di-trans,octa-cis-undecaprenyl diphospho-N-acetyl-alpha-D-muramoyl-L-alanyl-D-glutamyl-meso-2,6-diaminopimeloyl-D-alanyl-D-alanine + UMP. The protein operates within cell wall biogenesis; peptidoglycan biosynthesis. Functionally, catalyzes the initial step of the lipid cycle reactions in the biosynthesis of the cell wall peptidoglycan: transfers peptidoglycan precursor phospho-MurNAc-pentapeptide from UDP-MurNAc-pentapeptide onto the lipid carrier undecaprenyl phosphate, yielding undecaprenyl-pyrophosphoryl-MurNAc-pentapeptide, known as lipid I. The protein is Phospho-N-acetylmuramoyl-pentapeptide-transferase of Vibrio vulnificus (strain YJ016).